The primary structure comprises 132 residues: Large ribosomal subunit protein uL22 (132 aa).

Belongs to the universal ribosomal protein uL22 family. As to quaternary structure, part of the 50S ribosomal subunit.

Its function is as follows. This protein binds specifically to 23S rRNA; its binding is stimulated by other ribosomal proteins, e.g. L4, L17, and L20. It is important during the early stages of 50S assembly. It makes multiple contacts with different domains of the 23S rRNA in the assembled 50S subunit and ribosome. In terms of biological role, the globular domain of the protein is located near the polypeptide exit tunnel on the outside of the subunit, while an extended beta-hairpin is found that lines the wall of the exit tunnel in the center of the 70S ribosome. The chain is Large ribosomal subunit protein uL22 from Pelagibacter ubique (strain HTCC1062).